We begin with the raw amino-acid sequence, 124 residues long: V-type proton ATPase subunit F 1 (124 aa).

Serine 87 is subject to Phosphoserine.

This sequence belongs to the V-ATPase F subunit family. As to quaternary structure, V-ATPase is a heteromultimeric enzyme made up of two complexes: the ATP-hydrolytic V1 complex and the proton translocation V0 complex. The V1 complex consists of three catalytic AB heterodimers that form a heterohexamer, three peripheral stalks each consisting of EG heterodimers, one central rotor including subunits D and F, and the regulatory subunits C and H. The proton translocation complex V0 consists of the proton transport subunit a, a ring of proteolipid subunits c9c'', rotary subunit d, subunits e and f, and the accessory subunits VhaAC45 and ATP6AP2.

In terms of biological role, subunit of the V1 complex of vacuolar(H+)-ATPase (V-ATPase), a multisubunit enzyme composed of a peripheral complex (V1) that hydrolyzes ATP and a membrane integral complex (V0) that translocates protons. V-ATPase is responsible for acidifying and maintaining the pH of intracellular compartments and in some cell types, is targeted to the plasma membrane, where it is responsible for acidifying the extracellular environment. The chain is V-type proton ATPase subunit F 1 (Vha14-1) from Drosophila melanogaster (Fruit fly).